Here is a 564-residue protein sequence, read N- to C-terminus: MRRPSTASLTRTPSRASPTRMPSRASLKMTPFRASLTKMESTALLRTLPRASLMRTPTRASLMRTPPRASPTRKPPRASPRTPSRASPTRRLPRASPMGSPHRASPMRTPPRASPTGTPSTASPTGTPSSASPTGTPPRASPTGTPPRAWATRSPSTASLTRTPSRASLTRWPPRASPTRTPPRESPRMSHRASPTRTPPRASPTRRPPRASPTRTPPRESLRTSHRASPTRMPPRASPTRRPPRASPTGSPPRASPMTPPRASPRTPPRASPTTTPSRASLTRTPSWASPTTTPSRASLMKMESTVSITRTPPRASPTGTPSRASPTGTPSRASLTGSPSRASLTGTPSRASLIGTPSRASLIGTPSRASLTGTPPRASLTGTSSTASLTRTPSRASLTRTQSSSSLTRTPSMASLTRTPPRASLTRTPPRASLTRTPPRASLTRTPPRASLTRTPSMVSLKRSPSRASLTRTPSRASLTMTPSRASLTRTPSTASLTGTPPTASLTRTPPTASLTRSPPTASLTRTPSTASLTRMPSTASLTRKSNVNQQCPASTPSSEVIS.

Residues 1–17 (MRRPSTASLTRTPSRAS) are compositionally biased toward polar residues. Positions 1 to 564 (MRRPSTASLT…ASTPSSEVIS (564 aa)) are disordered. 2 stretches are compositionally biased toward low complexity: residues 79-97 (SPRTPSRASPTRRLPRASP) and 114-134 (SPTGTPSTASPTGTPSSASPT). The segment covering 153–168 (RSPSTASLTRTPSRAS) has biased composition (polar residues). Over residues 170–179 (TRWPPRASPT) the composition is skewed to low complexity. Over residues 250–271 (GSPPRASPMTPPRASPRTPPRA) the composition is skewed to pro residues. Over residues 272–299 (SPTTTPSRASLTRTPSWASPTTTPSRAS) the composition is skewed to low complexity. The span at 318-351 (PTGTPSRASPTGTPSRASLTGSPSRASLTGTPSR) shows a compositional bias: polar residues. Residues 378 to 416 (RASLTGTSSTASLTRTPSRASLTRTQSSSSLTRTPSMAS) show a composition bias toward low complexity. Positions 467-564 (SRASLTRTPS…ASTPSSEVIS (98 aa)) are enriched in polar residues.

This is an uncharacterized protein from Homo sapiens (Human).